The chain runs to 206 residues: Uridine kinase (206 aa).

11-18 (GGTGSGKS) is a binding site for ATP.

The protein belongs to the uridine kinase family.

It is found in the cytoplasm. The enzyme catalyses uridine + ATP = UMP + ADP + H(+). The catalysed reaction is cytidine + ATP = CMP + ADP + H(+). Its pathway is pyrimidine metabolism; CTP biosynthesis via salvage pathway; CTP from cytidine: step 1/3. It participates in pyrimidine metabolism; UMP biosynthesis via salvage pathway; UMP from uridine: step 1/1. The chain is Uridine kinase from Clostridium botulinum (strain Kyoto / Type A2).